We begin with the raw amino-acid sequence, 230 residues long: Cytidylate kinase (230 aa).

ATP is bound at residue 12–20 (GPSGAGKGT).

It belongs to the cytidylate kinase family. Type 1 subfamily.

The protein resides in the cytoplasm. It carries out the reaction CMP + ATP = CDP + ADP. The catalysed reaction is dCMP + ATP = dCDP + ADP. In Shewanella oneidensis (strain ATCC 700550 / JCM 31522 / CIP 106686 / LMG 19005 / NCIMB 14063 / MR-1), this protein is Cytidylate kinase.